The chain runs to 342 residues: D-erythrose-4-phosphate dehydrogenase (342 aa).

12–13 (RI) provides a ligand contact to NAD(+). Substrate is bound by residues 154 to 156 (SCT), arginine 200, 213 to 214 (TK), and arginine 236. Residue cysteine 155 is the Nucleophile of the active site. Asparagine 318 is an NAD(+) binding site.

The protein belongs to the glyceraldehyde-3-phosphate dehydrogenase family. Epd subfamily. In terms of assembly, homotetramer.

It is found in the cytoplasm. The catalysed reaction is D-erythrose 4-phosphate + NAD(+) + H2O = 4-phospho-D-erythronate + NADH + 2 H(+). Its pathway is cofactor biosynthesis; pyridoxine 5'-phosphate biosynthesis; pyridoxine 5'-phosphate from D-erythrose 4-phosphate: step 1/5. Its function is as follows. Catalyzes the NAD-dependent conversion of D-erythrose 4-phosphate to 4-phosphoerythronate. This chain is D-erythrose-4-phosphate dehydrogenase, found in Klebsiella pneumoniae (strain 342).